The following is a 593-amino-acid chain: ESX-1 secretion system protein EccCb1 (593 aa).

2 consecutive FtsK domains span residues 66–260 and 350–546; these read RQEV…NETQ and QVPL…EKND. ATP-binding positions include 85–92 and 377–384; these read GAPQTGKS and GAPKSGKT.

Part of the ESX-1 / type VII secretion system (T7SS), which is composed of cytosolic and membrane components. The ESX-1 membrane complex is composed of EccB1, EccCa1, EccCb1, EccD1 and EccE1.

It localises to the cytoplasm. Functionally, part of the ESX-1 / type VII specialized secretion system (T7SS), which exports several proteins including EsxA and EsxB. Plays a role in DNA conjugation, in both donor and recipient strains. This is ESX-1 secretion system protein EccCb1 (eccCb1) from Mycolicibacterium smegmatis (strain MKD8) (Mycobacterium smegmatis).